The primary structure comprises 93 residues: Bublin coiled-coil protein (93 aa).

Disordered stretches follow at residues 1 to 26 (MAGPNGDPHVLGGGTGDEGDEGGDTF) and 74 to 93 (QQQSKQLNTGADVQGSQPPA). Positions 17-26 (DEGDEGGDTF) are enriched in acidic residues. A coiled-coil region spans residues 59 to 80 (LKELLESNRQTRLEFQQQSKQL).

This sequence belongs to the UPF0184 (EST00098) family.

It is found in the cell junction. The protein resides in the cytoplasm. It localises to the cytoskeleton. Essential for intermediate filament organization in intestinal cells, interacts with intermediate filament and regulates intestinal lumen morphology. This is Bublin coiled-coil protein (BBLN) from Taeniopygia guttata (Zebra finch).